The chain runs to 1388 residues: Endoribonuclease Dicer homolog 2 (1388 aa).

Residues Ala31–Leu210 enclose the Helicase ATP-binding domain. Position 44-51 (Leu44–Thr51) interacts with ATP. The DECH box signature appears at Asp152–His155. The 165-residue stretch at Leu380–Leu544 folds into the Helicase C-terminal domain. In terms of domain architecture, Dicer dsRNA-binding fold spans Ser559–Val645. The region spanning Thr805–Leu935 is the PAZ domain. RNase III domains lie at Ala962–Gly1113 and Val1149–Gly1296. Mg(2+)-binding residues include Glu1188, Asp1282, and Glu1285. Positions Thr1315–Asn1384 constitute a DRBM domain.

The protein belongs to the helicase family. Dicer subfamily. Mg(2+) is required as a cofactor. Requires Mn(2+) as cofactor.

Its subcellular location is the nucleus. The protein resides in the cytoplasm. In terms of biological role, ribonuclease (RNase) III involved in RNA-mediated post-transcriptional gene silencing (PTGS). Involved in the processing of natural small interfering RNAs (nat-siRNAs, derived from cis-natural antisense transcripts) by cleaving small dsRNAs into 24 nucleotide nat-siRNAs. Plays an essential role in transitive silencing of transgenes by processing secondary siRNAs. This pathway, which requires DCL4 and RDR6, amplifies silencing by using the target RNA as substrate to generate secondary siRNAs, providing an efficient mechanism for long-distance silencing. May participate with DCL3 in the production of 24 nucleotide repeat-associated siRNAs (ra-siRNAs) which derive from heterochromatin and DNA repeats such as transposons. Plays a role in antiviral RNA silencing. Involved in the production of viral siRNAs derived from the turnip crinkle virus (TCV) and tobacco rattle virus (TRV). Targeted by the viral silencing suppressor (VSR) protein 2b of the cucumber mosaic virus (CMV) that inactivates DCL2 function in RNA silencing. Does not seem to be involved in microRNAs (miRNAs) processing. This Arabidopsis thaliana (Mouse-ear cress) protein is Endoribonuclease Dicer homolog 2.